A 244-amino-acid chain; its full sequence is Glucosamine-6-phosphate deaminase (244 aa).

The active-site Proton acceptor; for enolization step is D67. Residue N136 is the For ring-opening step of the active site. The active-site Proton acceptor; for ring-opening step is the H138. The For ring-opening step role is filled by E143.

It belongs to the glucosamine/galactosamine-6-phosphate isomerase family. NagB subfamily.

The catalysed reaction is alpha-D-glucosamine 6-phosphate + H2O = beta-D-fructose 6-phosphate + NH4(+). The protein operates within amino-sugar metabolism; N-acetylneuraminate degradation; D-fructose 6-phosphate from N-acetylneuraminate: step 5/5. In terms of biological role, catalyzes the reversible isomerization-deamination of glucosamine 6-phosphate (GlcN6P) to form fructose 6-phosphate (Fru6P) and ammonium ion. The protein is Glucosamine-6-phosphate deaminase of Clostridium botulinum (strain 657 / Type Ba4).